The sequence spans 299 residues: Diaminopimelate epimerase (299 aa).

3 residues coordinate substrate: asparagine 13, glutamine 46, and asparagine 66. Cysteine 75 (proton donor) is an active-site residue. Residues glycine 76–asparagine 77, asparagine 166, asparagine 199, and glutamate 217–arginine 218 contribute to the substrate site. The active-site Proton acceptor is the cysteine 226. Glycine 227–threonine 228 is a binding site for substrate.

The protein belongs to the diaminopimelate epimerase family. Homodimer.

The protein resides in the cytoplasm. It carries out the reaction (2S,6S)-2,6-diaminopimelate = meso-2,6-diaminopimelate. It functions in the pathway amino-acid biosynthesis; L-lysine biosynthesis via DAP pathway; DL-2,6-diaminopimelate from LL-2,6-diaminopimelate: step 1/1. In terms of biological role, catalyzes the stereoinversion of LL-2,6-diaminopimelate (L,L-DAP) to meso-diaminopimelate (meso-DAP), a precursor of L-lysine and an essential component of the bacterial peptidoglycan. The polypeptide is Diaminopimelate epimerase (Paraburkholderia phytofirmans (strain DSM 17436 / LMG 22146 / PsJN) (Burkholderia phytofirmans)).